A 134-amino-acid chain; its full sequence is uncharacterized protein (134 aa).

The region spanning 4-107 (IFTKIINREL…PTHSLSNFSF (104 aa)) is the HIT domain. The short motif at 91-95 (HLHIH) is the Histidine triad motif element.

This is an uncharacterized protein from Mycobacterium leprae (strain TN).